The chain runs to 71 residues: Small ribosomal subunit protein bS21 (71 aa).

The tract at residues 47-71 is disordered; that stretch reads RENATRAKRHAKRVARENARNTRLY. Positions 60–71 are enriched in basic and acidic residues; sequence VARENARNTRLY.

Belongs to the bacterial ribosomal protein bS21 family.

This Actinobacillus succinogenes (strain ATCC 55618 / DSM 22257 / CCUG 43843 / 130Z) protein is Small ribosomal subunit protein bS21.